Consider the following 251-residue polypeptide: 1-(5-phosphoribosyl)-5-[(5-phosphoribosylamino)methylideneamino] imidazole-4-carboxamide isomerase (251 aa).

Asp-8 functions as the Proton acceptor in the catalytic mechanism. Asp-131 (proton donor) is an active-site residue.

It belongs to the HisA/HisF family.

Its subcellular location is the cytoplasm. The catalysed reaction is 1-(5-phospho-beta-D-ribosyl)-5-[(5-phospho-beta-D-ribosylamino)methylideneamino]imidazole-4-carboxamide = 5-[(5-phospho-1-deoxy-D-ribulos-1-ylimino)methylamino]-1-(5-phospho-beta-D-ribosyl)imidazole-4-carboxamide. The protein operates within amino-acid biosynthesis; L-histidine biosynthesis; L-histidine from 5-phospho-alpha-D-ribose 1-diphosphate: step 4/9. This is 1-(5-phosphoribosyl)-5-[(5-phosphoribosylamino)methylideneamino] imidazole-4-carboxamide isomerase from Burkholderia cenocepacia (strain ATCC BAA-245 / DSM 16553 / LMG 16656 / NCTC 13227 / J2315 / CF5610) (Burkholderia cepacia (strain J2315)).